Consider the following 149-residue polypeptide: UPF0178 protein lwe1471 (149 aa).

It belongs to the UPF0178 family.

The polypeptide is UPF0178 protein lwe1471 (Listeria welshimeri serovar 6b (strain ATCC 35897 / DSM 20650 / CCUG 15529 / CIP 8149 / NCTC 11857 / SLCC 5334 / V8)).